The sequence spans 313 residues: L-lactate dehydrogenase (313 aa).

NAD(+) is bound by residues valine 11, aspartate 32, arginine 37, tyrosine 62, and 76–77 (GV). Substrate contacts are provided by residues glutamine 79, arginine 85, and 117–120 (NPVD). NAD(+)-binding positions include 115-117 (ASN) and serine 143. 148–151 (DTAR) lines the substrate pocket. Residues arginine 153 and histidine 168 each contribute to the beta-D-fructose 1,6-bisphosphate site. Catalysis depends on histidine 175, which acts as the Proton acceptor. At tyrosine 221 the chain carries Phosphotyrosine. Threonine 230 is a binding site for substrate.

Belongs to the LDH/MDH superfamily. LDH family. In terms of assembly, homotetramer.

Its subcellular location is the cytoplasm. The enzyme catalyses (S)-lactate + NAD(+) = pyruvate + NADH + H(+). The protein operates within fermentation; pyruvate fermentation to lactate; (S)-lactate from pyruvate: step 1/1. Its activity is regulated as follows. Allosterically activated by fructose 1,6-bisphosphate (FBP). In terms of biological role, catalyzes the conversion of lactate to pyruvate. The polypeptide is L-lactate dehydrogenase (Geotalea daltonii (strain DSM 22248 / JCM 15807 / FRC-32) (Geobacter daltonii)).